Consider the following 336-residue polypeptide: Aspartate--ammonia ligase (336 aa).

Belongs to the class-II aminoacyl-tRNA synthetase family. AsnA subfamily.

It is found in the cytoplasm. It carries out the reaction L-aspartate + NH4(+) + ATP = L-asparagine + AMP + diphosphate + H(+). The protein operates within amino-acid biosynthesis; L-asparagine biosynthesis; L-asparagine from L-aspartate (ammonia route): step 1/1. The protein is Aspartate--ammonia ligase of Clostridium perfringens (strain SM101 / Type A).